We begin with the raw amino-acid sequence, 71 residues long: MGRKKESFENMLEKLETIVDSMDNGEITLEDSMKSYEEGIKLCNKLYKVLKDAEGKIKILEDNKEEDFENS.

The protein belongs to the XseB family. Heterooligomer composed of large and small subunits.

It localises to the cytoplasm. It catalyses the reaction Exonucleolytic cleavage in either 5'- to 3'- or 3'- to 5'-direction to yield nucleoside 5'-phosphates.. Its function is as follows. Bidirectionally degrades single-stranded DNA into large acid-insoluble oligonucleotides, which are then degraded further into small acid-soluble oligonucleotides. This Clostridium botulinum (strain 657 / Type Ba4) protein is Exodeoxyribonuclease 7 small subunit.